The sequence spans 739 residues: Polyribonucleotide nucleotidyltransferase (739 aa).

Mg(2+)-binding residues include aspartate 487 and aspartate 493. The KH domain maps to proline 554 to isoleucine 613. Positions glycine 623–lysine 691 constitute an S1 motif domain. The segment at aspartate 694 to glutamate 739 is disordered. The span at isoleucine 701 to glutamate 739 shows a compositional bias: basic and acidic residues.

It belongs to the polyribonucleotide nucleotidyltransferase family. Requires Mg(2+) as cofactor.

It localises to the cytoplasm. The catalysed reaction is RNA(n+1) + phosphate = RNA(n) + a ribonucleoside 5'-diphosphate. Its function is as follows. Involved in mRNA degradation. Catalyzes the phosphorolysis of single-stranded polyribonucleotides processively in the 3'- to 5'-direction. The protein is Polyribonucleotide nucleotidyltransferase of Methylobacterium radiotolerans (strain ATCC 27329 / DSM 1819 / JCM 2831 / NBRC 15690 / NCIMB 10815 / 0-1).